The sequence spans 1634 residues: Leucine-rich repeat-containing protein 37A3 (1634 aa).

The N-terminal stretch at 1–35 (MTSAQCPALACVMSPLRFWGPWPLLMWQLLWLLVK) is a signal peptide. The Extracellular segment spans residues 36–1581 (EAQPLEWVKD…ELPGYGYTKK (1546 aa)). Disordered stretches follow at residues 53 to 104 (PLGP…ESTE), 129 to 154 (SQQD…KKDP), 172 to 531 (TPQS…VVVA), 619 to 642 (PEPT…KHPE), and 758 to 777 (EPTT…APRP). The LRR 1 repeat unit spans residues 137–160 (LSPQERLPVSPKKLKKDPAQRWSL). Polar residues-rich tracts occupy residues 172–189 (TPQS…STDT) and 223–237 (ETQN…QSSS). LRR repeat units lie at residues 230–253 (LEDI…LEEE) and 267–290 (ESSM…EDQA). Positions 238-249 (LQQEAPAQLPQL) are enriched in low complexity. Residue Asn-296 is glycosylated (N-linked (GlcNAc...) asparagine). Over residues 307–326 (TITSEPTNETESSQAQQETP) the composition is skewed to polar residues. Residues 358–368 (SEQQQPVQPSE) are compositionally biased toward low complexity. The span at 433–446 (LVHQEATTRLSGSG) shows a compositional bias: polar residues. Residues 482-493 (SPEPINNENPSP) show a composition bias toward low complexity. The segment covering 760–770 (TTETGHSTALE) has biased composition (polar residues). 6 LRR repeats span residues 864–887 (NGTF…VWKA), 888–911 (YSWT…SFEG), 912–935 (LLSL…TFEP), 937–959 (PFLK…TFQA), 963–987 (MQFL…LFKL), and 1002–1027 (LTTL…MACC). Residue Asn-1079 is glycosylated (N-linked (GlcNAc...) asparagine). 2 LRR repeats span residues 1124–1146 (LPYF…KLPT) and 1151–1176 (LAKI…SIQK). Composition is skewed to basic and acidic residues over residues 1181-1191 (EVGRQSIRREQ) and 1201-1216 (AEEK…ELKQ). Disordered stretches follow at residues 1181–1227 (EVGR…EKLA) and 1306–1329 (RFHK…KVRK). An LRR 12 repeat occupies 1359-1384 (FSSLRDLSPQENPFLEVSAPSEHFIE). The helical transmembrane segment at 1582–1602 (LILALIVTGILTILIILLCLI) threads the bilayer. Residues 1603–1634 (EICCHRRSLQEDEEGFSRDSEAPTEEESEALP) are Cytoplasmic-facing. The disordered stretch occupies residues 1614 to 1634 (DEEGFSRDSEAPTEEESEALP). Acidic residues predominate over residues 1624–1634 (APTEEESEALP).

Belongs to the LRRC37A family.

The protein localises to the membrane. This chain is Leucine-rich repeat-containing protein 37A3 (LRRC37A3), found in Homo sapiens (Human).